We begin with the raw amino-acid sequence, 230 residues long: MTEIADPRDRLIVALDLPSVQAAEALIDRIGDAATFYKIGYQLGYAGGLALAERLAARGLKVFLDLKLHDIGNTVEEGVRSASGSGATFLTVHAYPQTMRAAVRGRGAGLRILAVTVLTSYDDADAAEAGYGLPVAELVAKRAAQAAEIGIDGLVCSAAEAGSVRRIVGPDRLIVTPGIRPAGAEAGDQKRVMTPGDARRAGIDHVVVGRPITGAADPRAVAQAIVADLA.

Substrate-binding positions include aspartate 16, lysine 38, 65–74, threonine 119, arginine 180, glutamine 189, glycine 209, and arginine 210; that span reads DLKLHDIGNT. Lysine 67 functions as the Proton donor in the catalytic mechanism.

Belongs to the OMP decarboxylase family. Type 1 subfamily. In terms of assembly, homodimer.

The enzyme catalyses orotidine 5'-phosphate + H(+) = UMP + CO2. It functions in the pathway pyrimidine metabolism; UMP biosynthesis via de novo pathway; UMP from orotate: step 2/2. Its function is as follows. Catalyzes the decarboxylation of orotidine 5'-monophosphate (OMP) to uridine 5'-monophosphate (UMP). The sequence is that of Orotidine 5'-phosphate decarboxylase from Methylobacterium radiotolerans (strain ATCC 27329 / DSM 1819 / JCM 2831 / NBRC 15690 / NCIMB 10815 / 0-1).